A 138-amino-acid chain; its full sequence is Histone H2B.8 (138 aa).

Basic and acidic residues predominate over residues Met-1–Glu-38. The tract at residues Met-1–Lys-45 is disordered. Ala-2 carries the n,N,N-trimethylalanine; alternate modification. At Ala-2 the chain carries N,N-dimethylalanine; alternate. Position 2 is an N-methylalanine; alternate (Ala-2). At Lys-4 the chain carries N6-methyllysine. Residues Lys-8 and Lys-13 each carry the N6-acetyllysine modification. Lys-14 carries the post-translational modification N6,N6-dimethyllysine. An N6-acetyllysine mark is found at Lys-18, Lys-23, Lys-29, and Lys-30. Residue Lys-134 forms a Glycyl lysine isopeptide (Lys-Gly) (interchain with G-Cter in ubiquitin) linkage.

This sequence belongs to the histone H2B family. The nucleosome is a histone octamer containing two molecules each of H2A, H2B, H3 and H4 assembled in one H3-H4 heterotetramer and two H2A-H2B heterodimers. The octamer wraps approximately 147 bp of DNA. Can be acetylated to form H2BK6ac, H2BK33ac and H2BK34ac. Post-translationally, monoubiquitinated by BRE1 to form H2BK143ub1 and deubiquitinated by UBP26. Required for heterochromatic histone H3 di- and trimethylation at H3K4me. May give a specific tag for epigenetic transcriptional activation.

The protein localises to the nucleus. Its subcellular location is the chromosome. Core component of nucleosome. Nucleosomes wrap and compact DNA into chromatin, limiting DNA accessibility to the cellular machineries which require DNA as a template. Histones thereby play a central role in transcription regulation, DNA repair, DNA replication and chromosomal stability. DNA accessibility is regulated via a complex set of post-translational modifications of histones, also called histone code, and nucleosome remodeling. This Arabidopsis thaliana (Mouse-ear cress) protein is Histone H2B.8.